The following is a 448-amino-acid chain: Beta-glucosidase A (448 aa).

The active-site Proton donor is Glu-166. Residue Glu-355 is the Nucleophile of the active site.

It belongs to the glycosyl hydrolase 1 family.

It carries out the reaction Hydrolysis of terminal, non-reducing beta-D-glucosyl residues with release of beta-D-glucose.. Its pathway is glycan metabolism; cellulose degradation. This is Beta-glucosidase A (bglA) from Acetivibrio thermocellus (strain ATCC 27405 / DSM 1237 / JCM 9322 / NBRC 103400 / NCIMB 10682 / NRRL B-4536 / VPI 7372) (Clostridium thermocellum).